We begin with the raw amino-acid sequence, 789 residues long: Alpha-glucosidase 2 (789 aa).

Disordered stretches follow at residues 1–24 (MTGL…PRVI) and 512–531 (ELNP…ASHP). Asp-523 serves as the catalytic Proton donor. Glu-756 functions as the Proton acceptor in the catalytic mechanism.

Belongs to the glycosyl hydrolase 63 family.

It participates in glycan metabolism; N-glycan degradation. The sequence is that of Alpha-glucosidase 2 (GCS2) from Arabidopsis thaliana (Mouse-ear cress).